Reading from the N-terminus, the 1077-residue chain is Error-prone DNA polymerase (1077 aa).

Belongs to the DNA polymerase type-C family. DnaE2 subfamily.

It localises to the cytoplasm. The enzyme catalyses DNA(n) + a 2'-deoxyribonucleoside 5'-triphosphate = DNA(n+1) + diphosphate. DNA polymerase involved in damage-induced mutagenesis and translesion synthesis (TLS). It is not the major replicative DNA polymerase. The chain is Error-prone DNA polymerase from Brucella suis biovar 1 (strain 1330).